The primary structure comprises 42 residues: Cytochrome b559 subunit beta (42 aa).

Residues 17-33 (WLSIHALAVPTVFFLGA) traverse the membrane as a helical segment. His21 serves as a coordination point for heme.

It belongs to the PsbE/PsbF family. In terms of assembly, heterodimer of an alpha subunit and a beta subunit. PSII is composed of 1 copy each of membrane proteins PsbA, PsbB, PsbC, PsbD, PsbE, PsbF, PsbH, PsbI, PsbJ, PsbK, PsbL, PsbM, PsbT, PsbX, PsbY, PsbZ, Psb30/Ycf12, at least 3 peripheral proteins of the oxygen-evolving complex and a large number of cofactors. It forms dimeric complexes. Heme b is required as a cofactor.

The protein resides in the plastid. Its subcellular location is the chloroplast thylakoid membrane. This b-type cytochrome is tightly associated with the reaction center of photosystem II (PSII). PSII is a light-driven water:plastoquinone oxidoreductase that uses light energy to abstract electrons from H(2)O, generating O(2) and a proton gradient subsequently used for ATP formation. It consists of a core antenna complex that captures photons, and an electron transfer chain that converts photonic excitation into a charge separation. The protein is Cytochrome b559 subunit beta of Tupiella akineta (Green alga).